Here is a 540-residue protein sequence, read N- to C-terminus: Probable LRR receptor-like serine/threonine-protein kinase RPK1 (540 aa).

The N-terminal stretch at 1–19 (MKLLGLVFLLFNLFMFSFS) is a signal peptide. Residues 20 to 198 (RKLLTESGGG…PGKSGLYPIE (179 aa)) lie on the Extracellular side of the membrane. LRR repeat units follow at residues 118–142 (LSEI…IWGL) and 144–169 (KLEI…VLRK). A helical membrane pass occupies residues 199–219 (IASIVSASVIVFVLLVLVILF). Topologically, residues 220 to 540 (IYTRKWKRNS…LLKRIQPSRL (321 aa)) are cytoplasmic. A phosphothreonine mark is found at T250 and T258. One can recognise a Protein kinase domain in the interval 261-535 (FSNSNCIGHG…KQAVRLLKRI (275 aa)). ATP contacts are provided by residues 267 to 275 (IGHGGFGST) and K289. Residues Y334 and Y372 each carry the phosphotyrosine modification. The Proton acceptor role is filled by D385. Position 427 is a phosphotyrosine (Y427). Position 435 is a phosphothreonine (T435).

The protein belongs to the protein kinase superfamily. Ser/Thr protein kinase family. Expressed in roots, stems, leaves, and flowers.

Its subcellular location is the cell membrane. It carries out the reaction L-seryl-[protein] + ATP = O-phospho-L-seryl-[protein] + ADP + H(+). The enzyme catalyses L-threonyl-[protein] + ATP = O-phospho-L-threonyl-[protein] + ADP + H(+). Involved in the main abscisic acid-mediated (ABA) signaling pathway and in early ABA perception. Together with RPK2, required for pattern formation along the radial axis (e.g. the apical embryonic domain cell types that generate cotyledon primordia), and the apical-basal axis (e.g. differentiation of the basal pole during early embryogenesis). The chain is Probable LRR receptor-like serine/threonine-protein kinase RPK1 (RPK1) from Arabidopsis thaliana (Mouse-ear cress).